The chain runs to 89 residues: MSITAERKQELLKEFATANADTGSPEVQVALLTERIKNLTEHFKEHQKDNHSRRGLLKLVSQRRRLLDYVKRKDEARYQALIEKLGLRR.

Belongs to the universal ribosomal protein uS15 family. As to quaternary structure, part of the 30S ribosomal subunit. Forms a bridge to the 50S subunit in the 70S ribosome, contacting the 23S rRNA.

One of the primary rRNA binding proteins, it binds directly to 16S rRNA where it helps nucleate assembly of the platform of the 30S subunit by binding and bridging several RNA helices of the 16S rRNA. Its function is as follows. Forms an intersubunit bridge (bridge B4) with the 23S rRNA of the 50S subunit in the ribosome. The sequence is that of Small ribosomal subunit protein uS15 from Chelativorans sp. (strain BNC1).